The chain runs to 606 residues: Zinc metalloproteinase-disintegrin-like HF3 (606 aa).

The signal sequence occupies residues 1–20 (MIQVLLVTICLAAFPYQGSS). Residues 21–190 (IILESGNVND…KKASQLVVTA (170 aa)) constitute a propeptide that is removed on maturation. In terms of domain architecture, Peptidase M12B spans 199–395 (KYIELVILAD…YKPQCILNEP (197 aa)). Glu-202 serves as a coordination point for Ca(2+). A glycan (N-linked (GlcNAc...) asparagine) is linked at Asn-259. Ca(2+) is bound at residue Asp-286. 3 cysteine pairs are disulfide-bonded: Cys-310–Cys-390, Cys-350–Cys-374, and Cys-352–Cys-357. N-linked (GlcNAc...) asparagine glycosylation occurs at Asn-313. His-335 is a binding site for Zn(2+). Glu-336 is an active-site residue. 2 residues coordinate Zn(2+): His-339 and His-345. Asn-373 is a glycosylation site (N-linked (GlcNAc...) asparagine). 8 residues coordinate Ca(2+): Cys-390, Asn-393, Val-405, Asn-408, Leu-410, Glu-412, Glu-415, and Asp-418. Residues 403 to 489 (PPVCGNELLE…DCPTDDFKRN (87 aa)) enclose the Disintegrin domain. Disulfide bonds link Cys-406–Cys-435, Cys-417–Cys-430, Cys-419–Cys-425, Cys-429–Cys-452, Cys-443–Cys-449, Cys-448–Cys-474, Cys-461–Cys-481, Cys-468–Cys-500, Cys-493–Cys-505, Cys-512–Cys-562, Cys-527–Cys-569, Cys-540–Cys-550, Cys-557–Cys-594, and Cys-588–Cys-599. Positions 467–469 (ECD) match the D/ECD-tripeptide motif. Ca(2+)-binding residues include Asp-469, Glu-472, and Asp-484. The N-linked (GlcNAc...) asparagine glycan is linked to Asn-519. A glycan (N-linked (GlcNAc...) asparagine) is linked at Asn-584.

It belongs to the venom metalloproteinase (M12B) family. P-III subfamily. P-IIIa sub-subfamily. In terms of assembly, monomer. The cofactor is Zn(2+). As to expression, expressed by the venom gland.

The protein resides in the secreted. Functionally, the metalloproteinase-disintegrin-like HF3 is a potent hemorrhagic toxin that activates macrophages for phagocytosis through integrin alpha-M/beta-2 (ITGAM/ITGB2). It inhibits collagen-induced platelet aggregation. This protein shows cleavage specificity for substrate for leucine at P1' position, followed by hydrophobic residues in P2'. This chain is Zinc metalloproteinase-disintegrin-like HF3, found in Bothrops jararaca (Jararaca).